A 459-amino-acid polypeptide reads, in one-letter code: Trigger factor (459 aa).

The 86-residue stretch at 161 to 246 (GDKVVIDFQG…IKKIMEGKLP (86 aa)) folds into the PPIase FKBP-type domain.

This sequence belongs to the FKBP-type PPIase family. Tig subfamily.

The protein localises to the cytoplasm. The enzyme catalyses [protein]-peptidylproline (omega=180) = [protein]-peptidylproline (omega=0). Functionally, involved in protein export. Acts as a chaperone by maintaining the newly synthesized protein in an open conformation. Functions as a peptidyl-prolyl cis-trans isomerase. The sequence is that of Trigger factor from Legionella pneumophila (strain Corby).